Reading from the N-terminus, the 624-residue chain is 1-deoxy-D-xylulose-5-phosphate synthase (624 aa).

Residues His74 and 115–117 contribute to the thiamine diphosphate site; that span reads GHS. Asp146 is a binding site for Mg(2+). Residues 147–148, Asn175, Tyr286, and Glu366 contribute to the thiamine diphosphate site; that span reads GA. A Mg(2+)-binding site is contributed by Asn175.

The protein belongs to the transketolase family. DXPS subfamily. As to quaternary structure, homodimer. It depends on Mg(2+) as a cofactor. The cofactor is thiamine diphosphate.

The enzyme catalyses D-glyceraldehyde 3-phosphate + pyruvate + H(+) = 1-deoxy-D-xylulose 5-phosphate + CO2. It participates in metabolic intermediate biosynthesis; 1-deoxy-D-xylulose 5-phosphate biosynthesis; 1-deoxy-D-xylulose 5-phosphate from D-glyceraldehyde 3-phosphate and pyruvate: step 1/1. In terms of biological role, catalyzes the acyloin condensation reaction between C atoms 2 and 3 of pyruvate and glyceraldehyde 3-phosphate to yield 1-deoxy-D-xylulose-5-phosphate (DXP). The protein is 1-deoxy-D-xylulose-5-phosphate synthase of Clostridium kluyveri (strain NBRC 12016).